Reading from the N-terminus, the 21-residue chain is Dart gland peptide (21 aa).

The interval 1–21 is disordered; the sequence is SINNTGGSGNRRLDKNGFAGQ. Asn-3 carries an N-linked (GlcNAc...) asparagine glycan.

The protein resides in the secreted. The chain is Dart gland peptide from Cornu aspersum (Brown garden snail).